Reading from the N-terminus, the 257-residue chain is MKEVFSVGGKELTSRLLIGSGKYSTNKLIPAILDASGSQVITMAMRRVDTEFTEENILNYIPSDCVLMPNTSGARNAQEAIRIARLARAAGCGDWVKIEVISDNRYLLPDNYETIRATEVLTAEGFQVFPYMSPDLMVAKELERVGAAAVMPLGAPIGSNRGLQTRELVRILIEEISLPVIVDAGIGRPSEAAEAMEMGAAAVLVNTAVATAKDPVAMARAFGLAVEAGRTAYLAGPGATQQVARASSPLTGFLREE.

The active-site Schiff-base intermediate with DXP is Lys-97. 1-deoxy-D-xylulose 5-phosphate-binding positions include Gly-158, 184-185 (AG), and 206-207 (NT).

The protein belongs to the ThiG family. In terms of assembly, homotetramer. Forms heterodimers with either ThiH or ThiS.

It is found in the cytoplasm. It carries out the reaction [ThiS sulfur-carrier protein]-C-terminal-Gly-aminoethanethioate + 2-iminoacetate + 1-deoxy-D-xylulose 5-phosphate = [ThiS sulfur-carrier protein]-C-terminal Gly-Gly + 2-[(2R,5Z)-2-carboxy-4-methylthiazol-5(2H)-ylidene]ethyl phosphate + 2 H2O + H(+). It participates in cofactor biosynthesis; thiamine diphosphate biosynthesis. Catalyzes the rearrangement of 1-deoxy-D-xylulose 5-phosphate (DXP) to produce the thiazole phosphate moiety of thiamine. Sulfur is provided by the thiocarboxylate moiety of the carrier protein ThiS. In vitro, sulfur can be provided by H(2)S. The sequence is that of Thiazole synthase from Desulforamulus reducens (strain ATCC BAA-1160 / DSM 100696 / MI-1) (Desulfotomaculum reducens).